The chain runs to 373 residues: Innexin shaking-B (373 aa).

At 1-21 (MLDIFRGLKSLVKISHVNTDS) the chain is on the cytoplasmic side. The helical transmembrane segment at 22–42 (PVFRLHYSITVIILMSFSLIV) threads the bilayer. Over 43–106 (TTRQYVGNPI…SAEATAADKK (64 aa)) the chain is Extracellular. A helical transmembrane segment spans residues 107–127 (IYKYYQWVCFCLFFQAILFYT). Residues 128 to 176 (PRWLWKSWEGGKIHALMMDLDIGICSEIEKKQKKKLLLDYLWDNLRYHN) are Cytoplasmic-facing. The helical transmembrane segment at 177 to 199 (WWAYRYYVCEFLSLCNVIGQMFL) threads the bilayer. Residues 200-268 (MNRFFDGEFM…ILPLNVVNEK (69 aa)) are Extracellular-facing. Residues 269-289 (IYIFLWFWFIILTILTTLTIF) form a helical membrane-spanning segment. The Cytoplasmic portion of the chain corresponds to 290–373 (YRIIIIFSPR…PGMKGEIQDA (84 aa)).

It belongs to the pannexin family. Monomer.

The protein resides in the cell membrane. It localises to the cell junction. The protein localises to the gap junction. In terms of biological role, structural component of the gap junctions at electrical synapses in distal and mid-depth levels in the lamina. The sequence is that of Innexin shaking-B from Anopheles gambiae (African malaria mosquito).